The following is a 467-amino-acid chain: Flagellar hook-associated protein 2 (467 aa).

Residues 411 to 439 (VNATLKSLTKQYLSVSNSIDETVARYKAQ) adopt a coiled-coil conformation.

Belongs to the FliD family. Homopentamer.

Its subcellular location is the secreted. It is found in the bacterial flagellum. Its function is as follows. Required for the morphogenesis and for the elongation of the flagellar filament by facilitating polymerization of the flagellin monomers at the tip of growing filament. Forms a capping structure, which prevents flagellin subunits (transported through the central channel of the flagellum) from leaking out without polymerization at the distal end. This Salmonella typhimurium (strain LT2 / SGSC1412 / ATCC 700720) protein is Flagellar hook-associated protein 2 (fliD).